A 1404-amino-acid chain; its full sequence is DNA-directed RNA polymerase subunit beta' (1404 aa).

Residues cysteine 60, cysteine 62, cysteine 75, and cysteine 78 each contribute to the Zn(2+) site. Aspartate 449, aspartate 451, and aspartate 453 together coordinate Mg(2+). The Zn(2+) site is built by cysteine 778, cysteine 852, cysteine 859, and cysteine 862. Residues 1381–1404 form a disordered region; that stretch reads DRPLEEEEEEEIPQSIADDSDGDE. Positions 1384–1404 are enriched in acidic residues; the sequence is LEEEEEEEIPQSIADDSDGDE.

The protein belongs to the RNA polymerase beta' chain family. The RNAP catalytic core consists of 2 alpha, 1 beta, 1 beta' and 1 omega subunit. When a sigma factor is associated with the core the holoenzyme is formed, which can initiate transcription. Requires Mg(2+) as cofactor. The cofactor is Zn(2+).

It catalyses the reaction RNA(n) + a ribonucleoside 5'-triphosphate = RNA(n+1) + diphosphate. Its function is as follows. DNA-dependent RNA polymerase catalyzes the transcription of DNA into RNA using the four ribonucleoside triphosphates as substrates. The chain is DNA-directed RNA polymerase subunit beta' from Leptospira borgpetersenii serovar Hardjo-bovis (strain L550).